A 168-amino-acid chain; its full sequence is S-ribosylhomocysteine lyase (168 aa).

His54, His58, and Cys128 together coordinate Fe cation.

This sequence belongs to the LuxS family. As to quaternary structure, homodimer. Requires Fe cation as cofactor.

It catalyses the reaction S-(5-deoxy-D-ribos-5-yl)-L-homocysteine = (S)-4,5-dihydroxypentane-2,3-dione + L-homocysteine. Involved in the synthesis of autoinducer 2 (AI-2) which is secreted by bacteria and is used to communicate both the cell density and the metabolic potential of the environment. The regulation of gene expression in response to changes in cell density is called quorum sensing. Catalyzes the transformation of S-ribosylhomocysteine (RHC) to homocysteine (HC) and 4,5-dihydroxy-2,3-pentadione (DPD). The protein is S-ribosylhomocysteine lyase of Actinobacillus succinogenes (strain ATCC 55618 / DSM 22257 / CCUG 43843 / 130Z).